The chain runs to 351 residues: 4-hydroxy-3-methylbut-2-enyl diphosphate reductase (351 aa).

Cysteine 18 provides a ligand contact to [4Fe-4S] cluster. (2E)-4-hydroxy-3-methylbut-2-enyl diphosphate is bound by residues histidine 47 and histidine 83. Residues histidine 47 and histidine 83 each coordinate dimethylallyl diphosphate. 2 residues coordinate isopentenyl diphosphate: histidine 47 and histidine 83. Cysteine 105 is a [4Fe-4S] cluster binding site. (2E)-4-hydroxy-3-methylbut-2-enyl diphosphate is bound at residue histidine 133. Residue histidine 133 coordinates dimethylallyl diphosphate. Histidine 133 is an isopentenyl diphosphate binding site. Glutamate 135 serves as the catalytic Proton donor. Position 174 (threonine 174) interacts with (2E)-4-hydroxy-3-methylbut-2-enyl diphosphate. Cysteine 204 lines the [4Fe-4S] cluster pocket. Positions 232, 233, 234, and 277 each coordinate (2E)-4-hydroxy-3-methylbut-2-enyl diphosphate. Residues serine 232, serine 233, asparagine 234, and serine 277 each coordinate dimethylallyl diphosphate. 4 residues coordinate isopentenyl diphosphate: serine 232, serine 233, asparagine 234, and serine 277.

The protein belongs to the IspH family. Requires [4Fe-4S] cluster as cofactor.

The catalysed reaction is isopentenyl diphosphate + 2 oxidized [2Fe-2S]-[ferredoxin] + H2O = (2E)-4-hydroxy-3-methylbut-2-enyl diphosphate + 2 reduced [2Fe-2S]-[ferredoxin] + 2 H(+). It catalyses the reaction dimethylallyl diphosphate + 2 oxidized [2Fe-2S]-[ferredoxin] + H2O = (2E)-4-hydroxy-3-methylbut-2-enyl diphosphate + 2 reduced [2Fe-2S]-[ferredoxin] + 2 H(+). The protein operates within isoprenoid biosynthesis; dimethylallyl diphosphate biosynthesis; dimethylallyl diphosphate from (2E)-4-hydroxy-3-methylbutenyl diphosphate: step 1/1. Its pathway is isoprenoid biosynthesis; isopentenyl diphosphate biosynthesis via DXP pathway; isopentenyl diphosphate from 1-deoxy-D-xylulose 5-phosphate: step 6/6. Catalyzes the conversion of 1-hydroxy-2-methyl-2-(E)-butenyl 4-diphosphate (HMBPP) into a mixture of isopentenyl diphosphate (IPP) and dimethylallyl diphosphate (DMAPP). Acts in the terminal step of the DOXP/MEP pathway for isoprenoid precursor biosynthesis. This is 4-hydroxy-3-methylbut-2-enyl diphosphate reductase from Bartonella tribocorum (strain CIP 105476 / IBS 506).